The primary structure comprises 447 residues: Ribosomal protein uS12 methylthiotransferase RimO (447 aa).

The region spanning 10–120 (PKVGFVSLGC…VVNAVHDVVP (111 aa)) is the MTTase N-terminal domain. [4Fe-4S] cluster contacts are provided by cysteine 19, cysteine 55, cysteine 84, cysteine 153, cysteine 157, and cysteine 160. The Radical SAM core domain maps to 139-377 (LTPRHYAYLK…MAHQQAISAA (239 aa)). In terms of domain architecture, TRAM spans 380 to 447 (QMKIGKEIEV…DEYDLWAEML (68 aa)).

It belongs to the methylthiotransferase family. RimO subfamily. Requires [4Fe-4S] cluster as cofactor.

Its subcellular location is the cytoplasm. The catalysed reaction is L-aspartate(89)-[ribosomal protein uS12]-hydrogen + (sulfur carrier)-SH + AH2 + 2 S-adenosyl-L-methionine = 3-methylsulfanyl-L-aspartate(89)-[ribosomal protein uS12]-hydrogen + (sulfur carrier)-H + 5'-deoxyadenosine + L-methionine + A + S-adenosyl-L-homocysteine + 2 H(+). Functionally, catalyzes the methylthiolation of an aspartic acid residue of ribosomal protein uS12. The protein is Ribosomal protein uS12 methylthiotransferase RimO of Pseudomonas syringae pv. syringae (strain B728a).